We begin with the raw amino-acid sequence, 285 residues long: Large ribosomal subunit protein uL1m (285 aa).

The transit peptide at 1 to 19 (MLSVVAIPKICVTGPARRC) directs the protein to the mitochondrion.

This sequence belongs to the universal ribosomal protein uL1 family. In terms of assembly, component of the mitochondrial large ribosomal subunit (mt-LSU). Mature yeast 74S mitochondrial ribosomes consist of a small (37S) and a large (54S) subunit. The 37S small subunit contains a 15S ribosomal RNA (15S mt-rRNA) and 34 different proteins. The 54S large subunit contains a 21S rRNA (21S mt-rRNA) and 46 different proteins.

It is found in the mitochondrion. Its function is as follows. Component of the mitochondrial ribosome (mitoribosome), a dedicated translation machinery responsible for the synthesis of mitochondrial genome-encoded proteins, including at least some of the essential transmembrane subunits of the mitochondrial respiratory chain. The mitoribosomes are attached to the mitochondrial inner membrane and translation products are cotranslationally integrated into the membrane. This is Large ribosomal subunit protein uL1m (MRPL1) from Saccharomyces cerevisiae (strain ATCC 204508 / S288c) (Baker's yeast).